The sequence spans 274 residues: Formamidopyrimidine-DNA glycosylase (274 aa).

P2 serves as the catalytic Schiff-base intermediate with DNA. E3 functions as the Proton donor in the catalytic mechanism. Residue K59 is the Proton donor; for beta-elimination activity of the active site. Positions 93, 112, and 155 each coordinate DNA. An FPG-type zinc finger spans residues 240 to 274; the sequence is QVYGRTGRPCPRCGQPLERVRLGGRSTHFCPRCQV. R264 acts as the Proton donor; for delta-elimination activity in catalysis.

It belongs to the FPG family. As to quaternary structure, monomer. It depends on Zn(2+) as a cofactor.

It carries out the reaction Hydrolysis of DNA containing ring-opened 7-methylguanine residues, releasing 2,6-diamino-4-hydroxy-5-(N-methyl)formamidopyrimidine.. The catalysed reaction is 2'-deoxyribonucleotide-(2'-deoxyribose 5'-phosphate)-2'-deoxyribonucleotide-DNA = a 3'-end 2'-deoxyribonucleotide-(2,3-dehydro-2,3-deoxyribose 5'-phosphate)-DNA + a 5'-end 5'-phospho-2'-deoxyribonucleoside-DNA + H(+). Functionally, involved in base excision repair of DNA damaged by oxidation or by mutagenic agents. Acts as a DNA glycosylase that recognizes and removes damaged bases. Has a preference for oxidized purines, such as 7,8-dihydro-8-oxoguanine (8-oxoG). Has AP (apurinic/apyrimidinic) lyase activity and introduces nicks in the DNA strand. Cleaves the DNA backbone by beta-delta elimination to generate a single-strand break at the site of the removed base with both 3'- and 5'-phosphates. The protein is Formamidopyrimidine-DNA glycosylase of Moorella thermoacetica (strain ATCC 39073 / JCM 9320).